We begin with the raw amino-acid sequence, 317 residues long: UV DNA damage endonuclease (317 aa).

It belongs to the uve1/UvsE family.

Its function is as follows. Component in a DNA repair pathway. Removal of UV LIGHT damaged nucleotides. Recognizes pyrimidine dimers and cleave a phosphodiester bond immediately 5' to the lesion. This chain is UV DNA damage endonuclease, found in Bacillus thuringiensis subsp. konkukian (strain 97-27).